We begin with the raw amino-acid sequence, 263 residues long: Cysteine-rich repeat secretory protein 55 (263 aa).

The N-terminal stretch at M1–A20 is a signal peptide. Gnk2-homologous domains lie at D22–F126 and T132–F240.

The protein belongs to the cysteine-rich repeat secretory protein family.

It localises to the secreted. The protein is Cysteine-rich repeat secretory protein 55 (CRRSP55) of Arabidopsis thaliana (Mouse-ear cress).